The sequence spans 299 residues: Ribosomal protein L11 methyltransferase (299 aa).

4 residues coordinate S-adenosyl-L-methionine: Thr-140, Gly-161, Asp-183, and Asn-232.

The protein belongs to the methyltransferase superfamily. PrmA family.

The protein resides in the cytoplasm. The enzyme catalyses L-lysyl-[protein] + 3 S-adenosyl-L-methionine = N(6),N(6),N(6)-trimethyl-L-lysyl-[protein] + 3 S-adenosyl-L-homocysteine + 3 H(+). Its function is as follows. Methylates ribosomal protein L11. In Synechococcus elongatus (strain ATCC 33912 / PCC 7942 / FACHB-805) (Anacystis nidulans R2), this protein is Ribosomal protein L11 methyltransferase.